A 231-amino-acid polypeptide reads, in one-letter code: Octanoyl-[acyl-carrier-protein]:protein N-octanoyltransferase LIPT2, mitochondrial (231 aa).

The N-terminal 31 residues, 1-31 (MRQPAVRLVRLGRVPYAELLGLQDRWLRRLQ), are a transit peptide targeting the mitochondrion. One can recognise a BPL/LPL catalytic domain in the interval 41–224 (GTEAGALLLC…AFKEIYKCTL (184 aa)). Substrate-binding positions include 85–92 (RGGLATFH), 154–156 (AIG), and 167–169 (GLA). Cys-185 serves as the catalytic Acyl-thioester intermediate.

The protein belongs to the LipB family.

It is found in the mitochondrion. It carries out the reaction octanoyl-[ACP] + L-lysyl-[protein] = N(6)-octanoyl-L-lysyl-[protein] + holo-[ACP] + H(+). The protein operates within protein modification; protein lipoylation via endogenous pathway; protein N(6)-(lipoyl)lysine from octanoyl-[acyl-carrier-protein]: step 1/2. Functionally, catalyzes the transfer of endogenously produced octanoic acid from octanoyl-acyl-carrier-protein (octanoyl-ACP) onto the lipoyl domains of lipoate-dependent enzymes such as the protein H of the glycine cleavage system (GCSH). Lipoyl-ACP can also act as a substrate although octanoyl-ACP is likely to be the physiological substrate. The polypeptide is Octanoyl-[acyl-carrier-protein]:protein N-octanoyltransferase LIPT2, mitochondrial (Homo sapiens (Human)).